Consider the following 156-residue polypeptide: RNA polymerase sigma factor SigS (156 aa).

The short motif at 29–44 is the Polymerase core binding element; it reads EYYQLLLIKMWQLSQI. The segment at residues 126-145 is a DNA-binding region (H-T-H motif); sequence QFEIAEIMSLSLSTIKLIKT.

The protein belongs to the sigma-70 factor family.

Functionally, sigma factors are initiation factors that promote the attachment of RNA polymerase to specific initiation sites and are then released. Sigma-S contributes to the protection against external stress, thus playing a role in cellular fitness and survival. The polypeptide is RNA polymerase sigma factor SigS (sigS) (Staphylococcus aureus (strain bovine RF122 / ET3-1)).